Here is an 855-residue protein sequence, read N- to C-terminus: Axonemal dynein light chain domain-containing protein 1 (855 aa).

Polar residues predominate over residues Met-1–Ser-17. Positions Met-1–Arg-31 are disordered. Coiled-coil stretches lie at residues Gln-316–Ala-402, Leu-451–Leu-480, and Ser-571–Gly-596.

Its subcellular location is the cytoplasm. Functionally, may be essential for spermiogenesis and male fertility probably by regulating the manchette dynamics, spermatid head shaping and sperm flagellum assembly. This chain is Axonemal dynein light chain domain-containing protein 1 (AXDND1), found in Macaca fascicularis (Crab-eating macaque).